The following is a 191-amino-acid chain: Fe/S biogenesis protein NfuA (191 aa).

Residues Cys-149 and Cys-152 each contribute to the [4Fe-4S] cluster site.

The protein belongs to the NfuA family. In terms of assembly, homodimer. [4Fe-4S] cluster serves as cofactor.

In terms of biological role, involved in iron-sulfur cluster biogenesis. Binds a 4Fe-4S cluster, can transfer this cluster to apoproteins, and thereby intervenes in the maturation of Fe/S proteins. Could also act as a scaffold/chaperone for damaged Fe/S proteins. This is Fe/S biogenesis protein NfuA from Pectobacterium carotovorum subsp. carotovorum (strain PC1).